The chain runs to 589 residues: MRPLPGALGVAAAAALWLLLLLLPRTRADEHEHTYQDKEEVVLWMNTVGPYHNRQETYKYFSLPFCVGSKKSISHYHETLGEALQGVELEFSGLDIKFKDDVMPATYCEIDLDKEKRDAFVYAIKNHYWYQMYIDDLPIWGIVGEADENGEDYYLWTYKKLEIGFNGNRIVDVNLTSEGKVKLVPNTKIQMSYSVKWKKSDVKFEDRFDKYLDPSFFQHRIHWFSIFNSFMMVIFLVGLVSMILMRTLRKDYARYSKEEEMDDMDRDLGDEYGWKQVHGDVFRPSSHPLIFSSLIGSGCQIFAVSLIVIIVAMIEDLYTERGSMLSTAIFVYAATSPVNGYFGGSLYARQGGRRWIKQMFIGAFLIPAMVCGTAFFINFIAIYYHASRAIPFGTMVAVCCICFFVILPLNLVGTILGRNLSGQPNFPCRVNAVPRPIPEKKWFMEPAVIVCLGGILPFGSIFIEMYFIFTSFWAYKIYYVYGFMMLVLVILCIVTVCVTIVCTYFLLNAEDYRWQWTSFLSAASTAIYVYMYSFYYYFFKTKMYGLFQTSFYFGYMAVFSTALGIMCGAIGYMGTSAFVRKIYTNVKID.

An N-terminal signal peptide occupies residues 1 to 28; sequence MRPLPGALGVAAAAALWLLLLLLPRTRA. The N-linked (GlcNAc...) asparagine glycan is linked to asparagine 174. Helical transmembrane passes span 224–244, 294–314, 328–348, 360–380, and 389–409; these read FSIF…SMIL, LIGS…VAMI, AIFV…SLYA, FIGA…INFI, and AIPF…ILPL. N-linked (GlcNAc...) asparagine glycosylation is present at asparagine 419. The next 4 helical transmembrane spans lie at 449–469, 482–502, 519–539, and 551–571; these read IVCL…YFIF, GFMM…TIVC, FLSA…YYFF, and FYFG…GAIG.

The protein belongs to the nonaspanin (TM9SF) (TC 9.A.2) family.

Its subcellular location is the membrane. This is Transmembrane 9 superfamily member 3 (TM9SF3) from Homo sapiens (Human).